The chain runs to 1133 residues: MDTHTLKSVSDLPGNFRSAFSFRYFNSLQSECFPLCFHSDINMIISAPTGSGKTVLFELCILRLFSKSISKEGSFLHAKGALKTVYISPSKALVQEKLRDWNQKFNSWGISCLELTGDNETYSTKNIQDADIILTTPEKFDAVSRYRVTSGGLGFFSDIALVLIDEVHLLNDPRGAALEAIVSRLKILSSNHELRSSTLASVRLLAVSATIPNIEDLAEWLKVPTAGIKRFGEEMRPVKLTTKVFGYAAAKNDFLFEKRLQNYIYDILMQYSKGKSALVFCSTRKGAQEAAQKLAQTAMTYGYSNPFIKSREQLERLREASPMCSDKQMQSYILQGVGYHNGGLCQKDRSLVEGLFLNGDIQVICTTNTLAHGINLPAHTVVIKSTQHFNKEKGHYMEYDRSTLLQMSGRAGRPPFDDTGMVIIMTRRETVHLYENLLNGCEVVESQLLPCLIEHLTAEIVQLTISDITRAIEWMKCSYLYVRMKKNPENYAIKKGIPKDRVEKHLQELCLQKINELSQYQMIWTDTDGFVLKPEEPGRLMTKYYLKFETMKYIINTPTSYSLDEALHIVCHAEEISWIQLRRNEKKTLNDVNADKEGRLRFHINDNKGKRKKRIQTREEKLFVLANDWLTGDPSVHDLSMTQDANSICSNGSRIARCMKEYFIYKKNYKGTLSSTLLAKSLYQKLWDDSPYLLKQLPGIGMVTAKALHSMGVRSFEALAEADPRRIEIVTGRKYPFGNTIKESLSSLPPKVEIKVEEVDCQKQGISKLAVTLSRVSQPLQSTKRHYADLIVGSEEENLIHFHEKIRMEDFSSPYSVTVLLERPHQQTKVTVKADLIFEEYIGIDLHETLLLKKANNNKVNYKSENRMPQYYPPMASACIADDDNPVTSGPSNRKDKKDDMPSFKLIDDDSEEEKEPYVTMEEDDCVIINEHTVFDHIREKAKCFPSLNPLNPTSSPASGKSILKRKSLVENNSPELDPLFQYDSVFDLPTNTKDIKQSAQQITSPGYASFAEKTETERPFSDETIFNYIRKRSKNSPALATSKIENPITISSQEGRNAEISPYRTYGLLVSPATKIPRITSDAPSEILSFDISMVKRSDTSLEQTKGFCSTLAGKSNVSDSFLGFKSIFSFL.

Residues 34 to 229 (PLCFHSDINM…WLKVPTAGIK (196 aa)) enclose the Helicase ATP-binding domain. 47-54 (APTGSGKT) lines the ATP pocket. Positions 165-168 (DEVH) match the DEVH box motif. The 198-residue stretch at 263-460 (YIYDILMQYS…CLIEHLTAEI (198 aa)) folds into the Helicase C-terminal domain. An SEC63 domain is found at 536–847 (EPGRLMTKYY…FEEYIGIDLH (312 aa)). Positions 878–919 (ACIADDDNPVTSGPSNRKDKKDDMPSFKLIDDDSEEEKEPYV) are disordered. Residues 893-908 (NRKDKKDDMPSFKLID) are compositionally biased toward basic and acidic residues. A compositionally biased stretch (acidic residues) spans 909–919 (DDSEEEKEPYV).

The protein belongs to the helicase family. SKI2 subfamily. Expressed in meiocytes during meiosis.

It is found in the nucleus. The enzyme catalyses Couples ATP hydrolysis with the unwinding of duplex DNA by translocating in the 3'-5' direction.. It carries out the reaction ATP + H2O = ADP + phosphate + H(+). DNA helicase required for crossover formation, complete synapsis of homologous chromosomes and bivalent formation during meiosis. Is specific to recombination events resulting in interference-sensitive crossovers (class I meiotic crossover). This Arabidopsis thaliana (Mouse-ear cress) protein is ATP-dependent DNA helicase homolog MER3.